Here is a 1312-residue protein sequence, read N- to C-terminus: Kinesin-like protein KIF16B (1312 aa).

The Kinesin motor domain maps to 3–358 (SVKVAVRVRP…LRYANRAKNI (356 aa)). 102 to 109 (GQTGSGKS) contacts ATP. Residues 366 to 425 (EDANVKLIRELRAEIARLKTLLAQGNQIALLDSPTALSMEEKLHQNEARVQELTKEWTNK) adopt a coiled-coil conformation. S398 carries the phosphoserine modification. The FHA domain maps to 480–544 (VGREDASTEQ…LNQGAVILLG (65 aa)). At T577 the chain carries Phosphothreonine. 4 positions are modified to phosphoserine: S582, S838, S1047, and S1145. Coiled coils occupy residues 835 to 913 (KLAS…LQNH) and 941 to 1073 (QVEK…KQKI). Residues 1177–1291 (DPIKISIPRY…KVGLTLSKHT (115 aa)) form the PX domain.

Belongs to the TRAFAC class myosin-kinesin ATPase superfamily. Kinesin family. Interacts with PTPN21. Interacts with RAB14.

It is found in the cytoplasm. It localises to the cytoskeleton. The protein resides in the early endosome membrane. The protein localises to the spindle. Functionally, plus end-directed microtubule-dependent motor protein involved in endosome transport and receptor recycling and degradation. Regulates the plus end motility of early endosomes and the balance between recycling and degradation of receptors such as EGF receptor (EGFR) and FGF receptor (FGFR). Regulates the Golgi to endosome transport of FGFR-containing vesicles during early development, a key process for developing basement membrane and epiblast and primitive endoderm lineages during early postimplantation development. In Mus musculus (Mouse), this protein is Kinesin-like protein KIF16B (Kif16b).